A 981-amino-acid chain; its full sequence is Probable NAD kinase 2, chloroplastic (981 aa).

Residues 319–364 form a calmodulin-binding region; the sequence is APSAEQVQRFAEIVSDSAKKPIYLHSQEGISRTSAMVSRWKQYVTR. Disordered stretches follow at residues 369–413 and 551–601; these read ATQN…DRTM and TNGK…AERN. 3 stretches are compositionally biased toward polar residues: residues 387–406, 551–563, and 581–596; these read TEQLTNSPGFSSEGSENGTP, TNGKPSNNGASTS, and SDTSNSNGNAPLGSQK.

This sequence belongs to the NAD kinase family.

The protein localises to the plastid. Its subcellular location is the chloroplast. It catalyses the reaction NAD(+) + ATP = ADP + NADP(+) + H(+). Functionally, involved in chlorophyll synthesis and chloroplast protection against oxidative damage. The sequence is that of Probable NAD kinase 2, chloroplastic from Oryza sativa subsp. japonica (Rice).